Here is a 234-residue protein sequence, read N- to C-terminus: 2,3-bisphosphoglycerate-dependent phosphoglycerate mutase (234 aa).

Substrate-binding positions include 10–17, 23–24, Arg-62, 89–92, Lys-100, 116–117, and 186–187; these read RHGSSIWN, TG, ERHY, RR, and GN. His-11 acts as the Tele-phosphohistidine intermediate in catalysis. The active-site Proton donor/acceptor is Glu-89.

Belongs to the phosphoglycerate mutase family. BPG-dependent PGAM subfamily. As to quaternary structure, homodimer.

The catalysed reaction is (2R)-2-phosphoglycerate = (2R)-3-phosphoglycerate. It participates in carbohydrate degradation; glycolysis; pyruvate from D-glyceraldehyde 3-phosphate: step 3/5. Functionally, catalyzes the interconversion of 2-phosphoglycerate and 3-phosphoglycerate. This is 2,3-bisphosphoglycerate-dependent phosphoglycerate mutase from Wigglesworthia glossinidia brevipalpis.